We begin with the raw amino-acid sequence, 686 residues long: Solute carrier family 22 member 23 (686 aa).

2 disordered regions span residues 1–62 and 169–193; these read MAID…GGGP and GNRS…DKGD. N-linked (GlcNAc...) asparagine glycosylation is present at asparagine 24. 2 helical membrane-spanning segments follow: residues 234 to 254 and 258 to 278; these read FSLL…ADWV and PVLL…ALSV. Asparagine 279 carries N-linked (GlcNAc...) asparagine glycosylation. 8 consecutive transmembrane segments (helical) span residues 288-308, 315-335, 344-364, 467-487, 494-514, 538-558, 569-589, and 598-618; these read FFEG…RIEL, FMIT…MPGL, VLQA…SIFP, ADYY…CVVV, GGLL…LGLL, IAFS…SVFF, CGGL…APII, and FLHH…ILLL.

This sequence belongs to the major facilitator (TC 2.A.1) superfamily. Organic cation transporter (TC 2.A.1.19) family.

The protein resides in the membrane. This chain is Solute carrier family 22 member 23 (SLC22A23), found in Homo sapiens (Human).